A 192-amino-acid polypeptide reads, in one-letter code: Cytidylate kinase (192 aa).

An ATP-binding site is contributed by 12–20; it reads GLAGSGTTT.

Belongs to the cytidylate kinase family. Type 2 subfamily.

It is found in the cytoplasm. It catalyses the reaction CMP + ATP = CDP + ADP. The enzyme catalyses dCMP + ATP = dCDP + ADP. This is Cytidylate kinase from Pyrococcus furiosus (strain ATCC 43587 / DSM 3638 / JCM 8422 / Vc1).